The following is a 254-amino-acid chain: Small ribosomal subunit protein uS2 (254 aa).

This sequence belongs to the universal ribosomal protein uS2 family.

This is Small ribosomal subunit protein uS2 from Brucella ovis (strain ATCC 25840 / 63/290 / NCTC 10512).